The primary structure comprises 207 residues: Small ribosomal subunit protein uS4 (207 aa).

The tract at residues 35–54 (RPKPPGPQLGRPRRLSDRGQ) is disordered. Residues 97–163 (RRLDNVLFRL…AYFKTLAENI (67 aa)) form the S4 RNA-binding domain.

This sequence belongs to the universal ribosomal protein uS4 family. As to quaternary structure, part of the 30S ribosomal subunit. Contacts protein S5. The interaction surface between S4 and S5 is involved in control of translational fidelity.

Its function is as follows. One of the primary rRNA binding proteins, it binds directly to 16S rRNA where it nucleates assembly of the body of the 30S subunit. Functionally, with S5 and S12 plays an important role in translational accuracy. The sequence is that of Small ribosomal subunit protein uS4 from Dehalococcoides mccartyi (strain CBDB1).